Consider the following 60-residue polypeptide: Large ribosomal subunit protein uL30 (60 aa).

This sequence belongs to the universal ribosomal protein uL30 family. In terms of assembly, part of the 50S ribosomal subunit.

This chain is Large ribosomal subunit protein uL30, found in Dehalococcoides mccartyi (strain ATCC BAA-2266 / KCTC 15142 / 195) (Dehalococcoides ethenogenes (strain 195)).